The primary structure comprises 1125 residues: Angiopoietin-1 receptor (1125 aa).

The signal sequence occupies residues 1 to 22 (MDSLAGLVLCGVSLLLSATVDG). Topologically, residues 23-748 (AMDLILINSL…PADLGGRKML (726 aa)) are extracellular. A disulfide bond links Cys-44 and Cys-102. The region spanning 44-123 (CIASGWRPHE…RTMKMRQQAS (80 aa)) is the Ig-like C2-type 1 domain. A glycan (N-linked (GlcNAc...) asparagine) is linked at Asn-158. 3 consecutive EGF-like domains span residues 210–252 (RCEA…RTCE), 254–299 (ACEP…LQCN), and 301–341 (ACQP…LQCE). 13 disulfide bridges follow: Cys-211/Cys-220, Cys-224/Cys-233, Cys-227/Cys-240, Cys-242/Cys-251, Cys-255/Cys-264, Cys-268/Cys-274, Cys-280/Cys-287, Cys-289/Cys-298, Cys-302/Cys-311, Cys-315/Cys-323, Cys-317/Cys-329, Cys-331/Cys-340, and Cys-370/Cys-424. Residues 350–440 (PKIEDLPDHI…GMVEKPFNIS (91 aa)) enclose the Ig-like C2-type 2 domain. 3 consecutive Fibronectin type-III domains span residues 447-541 (PLNA…TASI), 545-637 (PPRG…TLSD), and 642-735 (QPEN…TLSE). A helical transmembrane segment spans residues 749–769 (LIAILGSAGMTCLTVLLAFLI). Residues 770 to 1125 (MLQLKRANVQ…GIDCSAEEAA (356 aa)) are Cytoplasmic-facing. The Protein kinase domain occupies 825–1097 (IKFQDVIGEG…QILVSLNRML (273 aa)). Residues 831–839 (IGEGNFGQV) and Lys-856 each bind ATP. Residue Tyr-861 is modified to Phosphotyrosine; by autocatalysis. The Proton acceptor role is filled by Asp-965. Phosphotyrosine; by autocatalysis is present on residues Tyr-993, Tyr-1103, and Tyr-1109.

It belongs to the protein kinase superfamily. Tyr protein kinase family. Tie subfamily. In terms of assembly, homodimer. Heterodimer with TIE1. Interacts with ANGPT1, ANGPT2 and ANGPT4. At cell-cell contacts in quiescent cells, forms a signaling complex composed of ANGPT1 plus TEK molecules from two adjoining cells. In the absence of endothelial cell-cell contacts, interaction with ANGPT1 mediates contacts with the extracellular matrix. Interacts (tyrosine phosphorylated) with TNIP2. Interacts (tyrosine phosphorylated) with SHC1 (via SH2 domain). Interacts with PTPRB; this promotes endothelial cell-cell adhesion. Interacts with DOK2, GRB2, GRB7, GRB14, PIK3R1 and PTPN11/SHP2. Colocalizes with DOK2 at contacts with the extracellular matrix in migrating cells. In terms of processing, proteolytic processing leads to the shedding of the extracellular domain (soluble TIE-2 alias sTIE-2). Autophosphorylated on tyrosine residues in response to ligand binding. Autophosphorylation occurs in trans, i.e. one subunit of the dimeric receptor phosphorylates tyrosine residues on the other subunit. Autophosphorylation occurs in a sequential manner, where Tyr-993 in the kinase activation loop is phosphorylated first, followed by autophosphorylation at Tyr-1109 and at additional tyrosine residues. ANGPT1-induced phosphorylation is impaired during hypoxia, due to increased expression of ANGPT2. Phosphorylation is important for interaction with GRB14, PIK3R1 and PTPN11. Phosphorylation at Tyr-1103 is important for interaction with GRB2 and GRB7. Phosphorylation at Tyr-1109 is important for interaction with DOK2 and for coupling to downstream signal transduction pathways in endothelial cells. Dephosphorylated by PTPRB. Post-translationally, ubiquitinated. The phosphorylated receptor is ubiquitinated and internalized, leading to its degradation. Specifically expressed in developing vascular endothelial cells.

It localises to the cell membrane. The protein localises to the cell junction. It is found in the focal adhesion. The protein resides in the cytoplasm. Its subcellular location is the cytoskeleton. It localises to the secreted. The enzyme catalyses L-tyrosyl-[protein] + ATP = O-phospho-L-tyrosyl-[protein] + ADP + H(+). Its activity is regulated as follows. Angiopoietin binding leads to receptor dimerization and activation by autophosphorylation at Tyr-993 on the kinase activation loop. Its function is as follows. Tyrosine-protein kinase that acts as a cell-surface receptor for ANGPT1, ANGPT2 and ANGPT4 and regulates angiogenesis, endothelial cell survival, proliferation, migration, adhesion and cell spreading, reorganization of the actin cytoskeleton, but also maintenance of vascular quiescence. Has anti-inflammatory effects by preventing the leakage of pro-inflammatory plasma proteins and leukocytes from blood vessels. Required for normal angiogenesis and heart development during embryogenesis. Required for post-natal hematopoiesis. After birth, activates or inhibits angiogenesis, depending on the context. Inhibits angiogenesis and promotes vascular stability in quiescent vessels, where endothelial cells have tight contacts. In quiescent vessels, ANGPT1 oligomers recruit TEK to cell-cell contacts, forming complexes with TEK molecules from adjoining cells, and this leads to preferential activation of phosphatidylinositol 3-kinase and the AKT1 signaling cascades. In migrating endothelial cells that lack cell-cell adhesions, ANGT1 recruits TEK to contacts with the extracellular matrix, leading to the formation of focal adhesion complexes, activation of PTK2/FAK and of the downstream kinases MAPK1/ERK2 and MAPK3/ERK1, and ultimately to the stimulation of sprouting angiogenesis. ANGPT1 signaling triggers receptor dimerization and autophosphorylation at specific tyrosine residues that then serve as binding sites for scaffold proteins and effectors. Signaling is modulated by ANGPT2 that has lower affinity for TEK, can promote TEK autophosphorylation in the absence of ANGPT1, but inhibits ANGPT1-mediated signaling by competing for the same binding site. Signaling is also modulated by formation of heterodimers with TIE1, and by proteolytic processing that gives rise to a soluble TEK extracellular domain. The soluble extracellular domain modulates signaling by functioning as decoy receptor for angiopoietins. TEK phosphorylates DOK2, GRB7, GRB14, PIK3R1, SHC1 and TIE1. This is Angiopoietin-1 receptor (TEK) from Bos taurus (Bovine).